The chain runs to 175 residues: Bifunctional protein PyrR (175 aa).

Residues 40–41 (TR), 102–110 (DDVLYTGRT), Arg135, and Val159 each bind substrate. Positions 98–110 (VVIIDDVLYTGRT) match the PRPP-binding motif.

This sequence belongs to the purine/pyrimidine phosphoribosyltransferase family. PyrR subfamily. In terms of assembly, homodimer and homohexamer; in equilibrium.

The enzyme catalyses UMP + diphosphate = 5-phospho-alpha-D-ribose 1-diphosphate + uracil. Functionally, regulates transcriptional attenuation of the pyrimidine nucleotide (pyr) operon by binding in a uridine-dependent manner to specific sites on pyr mRNA. This disrupts an antiterminator hairpin in the RNA and favors formation of a downstream transcription terminator, leading to a reduced expression of downstream genes. In terms of biological role, also displays a weak uracil phosphoribosyltransferase activity which is not physiologically significant. In Staphylococcus epidermidis (strain ATCC 12228 / FDA PCI 1200), this protein is Bifunctional protein PyrR.